The chain runs to 384 residues: Autophagy-related protein 30 (384 aa).

The interval 1-63 (MFSRKQVQKR…ASPGQLRPRT (63 aa)) is disordered. Over residues 13–27 (ELSSLHCSNSSNSLN) the composition is skewed to low complexity. The segment covering 45–63 (RGNNRSDNVASPGQLRPRT) has biased composition (polar residues). Ser-112 carries the phosphoserine modification. The interval 266-291 (VKHDKPSSPLPNYHNTLKQAPSSNSQ) is disordered. The span at 278-291 (YHNTLKQAPSSNSQ) shows a compositional bias: polar residues.

Interacts with ATG11, ATG17, ATG37, PEX3 and PEX14. Phosphorylation at Ser-112 is required for micro- and macropexophagy.

It localises to the vacuole lumen. The protein resides in the preautophagosomal structure. Its subcellular location is the peroxisome membrane. Acts as the peroxisome receptor for pexophagy. Required for both micropexophagy and macropexophagy, but not for the cytoplasm to vacuole transport (Cvt) or autophagy pathways. Required for functional micropexophagic apparatus (MIPA) and relocation of ATG11 to the peroxisome-sequestering arms of the vacuole. The polypeptide is Autophagy-related protein 30 (ATG30) (Komagataella phaffii (strain GS115 / ATCC 20864) (Yeast)).